We begin with the raw amino-acid sequence, 371 residues long: Chorismate synthase (371 aa).

Residues R48 and R54 each coordinate NADP(+). FMN-binding positions include 132 to 134, 244 to 245, G289, 304 to 308, and R330; these read RSS, NA, and KPTSS.

Belongs to the chorismate synthase family. Homotetramer. The cofactor is FMNH2.

The catalysed reaction is 5-O-(1-carboxyvinyl)-3-phosphoshikimate = chorismate + phosphate. Its pathway is metabolic intermediate biosynthesis; chorismate biosynthesis; chorismate from D-erythrose 4-phosphate and phosphoenolpyruvate: step 7/7. Catalyzes the anti-1,4-elimination of the C-3 phosphate and the C-6 proR hydrogen from 5-enolpyruvylshikimate-3-phosphate (EPSP) to yield chorismate, which is the branch point compound that serves as the starting substrate for the three terminal pathways of aromatic amino acid biosynthesis. This reaction introduces a second double bond into the aromatic ring system. The chain is Chorismate synthase from Methylobacterium nodulans (strain LMG 21967 / CNCM I-2342 / ORS 2060).